The sequence spans 141 residues: Hemoglobin subunit alpha-D (141 aa).

The region spanning 1–141 (MLTADDKKLL…VAAVLAEKYR (141 aa)) is the Globin domain. His-58 and His-87 together coordinate heme b.

It belongs to the globin family. Heterotetramer of two alpha-D chains and two beta chains. As to expression, red blood cells.

Its function is as follows. Involved in oxygen transport from the lung to the various peripheral tissues. The polypeptide is Hemoglobin subunit alpha-D (HBAD) (Anser anser anser (Western greylag goose)).